A 583-amino-acid chain; its full sequence is Aspartate--tRNA(Asp/Asn) ligase (583 aa).

Glu-172 is an L-aspartate binding site. Residues 196–199 (QMLK) form an aspartate region. Arg-218 is a binding site for L-aspartate. ATP contacts are provided by residues 218–220 (RDE) and Gln-227. Residue His-446 coordinates L-aspartate. Residue Glu-480 coordinates ATP. L-aspartate is bound at residue Arg-487. 532 to 535 (GLDR) is a binding site for ATP.

This sequence belongs to the class-II aminoacyl-tRNA synthetase family. Type 1 subfamily. As to quaternary structure, homodimer.

The protein resides in the cytoplasm. It catalyses the reaction tRNA(Asx) + L-aspartate + ATP = L-aspartyl-tRNA(Asx) + AMP + diphosphate. Aspartyl-tRNA synthetase with relaxed tRNA specificity since it is able to aspartylate not only its cognate tRNA(Asp) but also tRNA(Asn). Reaction proceeds in two steps: L-aspartate is first activated by ATP to form Asp-AMP and then transferred to the acceptor end of tRNA(Asp/Asn). This chain is Aspartate--tRNA(Asp/Asn) ligase, found in Streptococcus mutans serotype c (strain ATCC 700610 / UA159).